Reading from the N-terminus, the 453-residue chain is UDP-N-acetylmuramate--L-alanyl-gamma-D-glutamyl-meso-2,6-diaminoheptandioate ligase (453 aa).

Position 111–117 (111–117) interacts with ATP; the sequence is GTHGKTT.

The protein belongs to the MurCDEF family. Mpl subfamily. Requires Mg(2+) as cofactor.

The catalysed reaction is UDP-N-acetyl-alpha-D-muramate + L-alanyl-gamma-D-glutamyl-meso-2,6-diaminopimelate + ATP = UDP-N-acetyl-alpha-D-muramoyl-L-alanyl-gamma-D-glutamyl-meso-2,6-diaminopimelate + ADP + phosphate + H(+). It functions in the pathway cell wall biogenesis; peptidoglycan recycling. In terms of biological role, reutilizes the intact tripeptide L-alanyl-gamma-D-glutamyl-meso-diaminopimelate by linking it to UDP-N-acetylmuramate. In Haemophilus influenzae (strain ATCC 51907 / DSM 11121 / KW20 / Rd), this protein is UDP-N-acetylmuramate--L-alanyl-gamma-D-glutamyl-meso-2,6-diaminoheptandioate ligase.